We begin with the raw amino-acid sequence, 712 residues long: MARQTPITRYRNIGISAHIDAGKTTTTERILFYTGVSHKIGEVHDGAATMDWMEQEQERGITITSAATTCFWSGMGNQFPQHRINVIDTPGHVDFTIEVERSMRVLDGACMVYCAVGGVQPQSETVWRQANKYKVPRLAFVNKMDRTGANFFRVVEQMKTRLGANPVPIVVPIGAEDTFTGVVDLIEMKAIIWDEASQGMKFEYGEIPADLVDTAQEWRTNMVEAAAEASEELMDKYLEEGDLSKEDIIAGLRARTLASEIQVMLCGSAFKNKGVQRMLDAVIEFLPSPTEVKAIEGILDDKDETKASREASDEAPFSALAFKIMNDKFVGNLTFVRVYSGVLKQGDAVYNPVKSKRERIGRIVQMHANERQDIDEIRAGDIAACVGLKDVTTGDTLCDEKNIITLERMEFPDPVIQLAVEPKTKADQEKMSIALGRLAKEDPSFRVHTDEESGQTIIAGMGELHLDIIVDRMKREFGVEANIGKPMVAYRETIKKTVEQEGKFVRQTGGKGKFGHVYVRLEPLDVEAAGKEYEFAEEVVGGVVPKEFFGAVDKGIQERMKNGVLAGYPVVGVKAVLFDGSYHDVDSDELSFKMAGSYAFRDGFMKADPVLLEPIMKVEVETPEDYMGDIMGDLNRRRGMVQGMDDLPGGTKAIKAEVPLAEMFGYATQMRSMSQGRATYSMEFAKYAETPRNVAEGIIAKFQAGGKKGDDE.

Residues 8-290 (TRYRNIGISA…AVIEFLPSPT (283 aa)) form the tr-type G domain. Residues 17–24 (AHIDAGKT), 88–92 (DTPGH), and 142–145 (NKMD) each bind GTP.

It belongs to the TRAFAC class translation factor GTPase superfamily. Classic translation factor GTPase family. EF-G/EF-2 subfamily.

The protein localises to the cytoplasm. In terms of biological role, catalyzes the GTP-dependent ribosomal translocation step during translation elongation. During this step, the ribosome changes from the pre-translocational (PRE) to the post-translocational (POST) state as the newly formed A-site-bound peptidyl-tRNA and P-site-bound deacylated tRNA move to the P and E sites, respectively. Catalyzes the coordinated movement of the two tRNA molecules, the mRNA and conformational changes in the ribosome. This is Elongation factor G from Acinetobacter baumannii (strain AB0057).